A 314-amino-acid chain; its full sequence is Olfactory receptor 52B4 (314 aa).

Topologically, residues 1–27 (MPTVNHSGTSHTVFHLLGIPGLQDQHM) are extracellular. N5 carries N-linked (GlcNAc...) asparagine glycosylation. A helical membrane pass occupies residues 28–48 (WISIPFFISYVTALLGNSLLI). The Cytoplasmic segment spans residues 49 to 56 (FIILTKRS). A helical membrane pass occupies residues 57 to 77 (LHEPMYLFLCMLAGADIVLST). Residues 78–101 (CTIPQALAIFWFRAGDISLDRCIT) lie on the Extracellular side of the membrane. C99 and C191 form a disulfide bridge. The chain crosses the membrane as a helical span at residues 102–122 (QLFFIHSTFISESGILLVMAF). Over 123-141 (DHYIAICYPLRYTTILTNA) the chain is Cytoplasmic. A helical transmembrane segment spans residues 142 to 162 (LIKKICVTVSLRSYGTIFPII). The Extracellular portion of the chain corresponds to 163 to 198 (FLLKRLTFCQNNIIPHTFCEHIGLAKYACNDIRINI). A helical transmembrane segment spans residues 199–219 (WYGFSILMSTVVLDVVLIFIS). Topologically, residues 220–239 (YMLILHAVFHMPSPDACHKA) are cytoplasmic. The chain crosses the membrane as a helical span at residues 240-260 (LNTFGSHVCIIILFYGSGIFT). The Extracellular portion of the chain corresponds to 261 to 275 (ILTQRFGRHIPPCIH). A helical transmembrane segment spans residues 276–296 (IPLANVCILAPPMLNPIIYGI). Residues 297–314 (KTKQIQEQVVQFLFIKQK) lie on the Cytoplasmic side of the membrane.

It belongs to the G-protein coupled receptor 1 family.

It is found in the cell membrane. In terms of biological role, odorant receptor. The sequence is that of Olfactory receptor 52B4 (OR52B4) from Homo sapiens (Human).